The chain runs to 61 residues: Small ribosomal subunit protein uS14 (61 aa).

The Zn(2+) site is built by cysteine 24, cysteine 27, cysteine 40, and cysteine 43.

Belongs to the universal ribosomal protein uS14 family. Zinc-binding uS14 subfamily. Part of the 30S ribosomal subunit. Contacts proteins S3 and S10. Zn(2+) is required as a cofactor.

Functionally, binds 16S rRNA, required for the assembly of 30S particles and may also be responsible for determining the conformation of the 16S rRNA at the A site. In Herpetosiphon aurantiacus (strain ATCC 23779 / DSM 785 / 114-95), this protein is Small ribosomal subunit protein uS14.